The chain runs to 156 residues: FAD synthase (156 aa).

Residues 16 to 17 (TF), 21 to 24 (HPGH), aspartate 101, and tyrosine 129 each bind ATP.

Belongs to the archaeal FAD synthase family. As to quaternary structure, homodimer. A divalent metal cation serves as cofactor.

The catalysed reaction is FMN + ATP + H(+) = FAD + diphosphate. Its pathway is cofactor biosynthesis; FAD biosynthesis; FAD from FMN: step 1/1. In terms of biological role, catalyzes the transfer of the AMP portion of ATP to flavin mononucleotide (FMN) to produce flavin adenine dinucleotide (FAD) coenzyme. In Methanococcus aeolicus (strain ATCC BAA-1280 / DSM 17508 / OCM 812 / Nankai-3), this protein is FAD synthase.